A 252-amino-acid polypeptide reads, in one-letter code: NAP1-related protein 2 (252 aa).

Residues 1-15 (MTAPADKGKKAKTDA) are compositionally biased toward basic and acidic residues. A disordered region spans residues 1–23 (MTAPADKGKKAKTDADGGAAEEN). A coiled-coil region spans residues 26-67 (IDGALVLSIEKLQEIQDELEKVNEEASDKVLEVEQKYSEIRR). Residues 222–252 (YFNNEAEELGEDDDEEGSDADEGEEDEEEEN) are disordered. The segment covering 226-252 (EAEELGEDDDEEGSDADEGEEDEEEEN) has biased composition (acidic residues).

Belongs to the nucleosome assembly protein (NAP) family.

The protein resides in the nucleus. Its subcellular location is the cytoplasm. Its function is as follows. Acts as a histone H2A/H2B chaperone in nucleosome assembly. This chain is NAP1-related protein 2, found in Oryza sativa subsp. indica (Rice).